The sequence spans 659 residues: Endoglucanase A (659 aa).

A catalytic region spans residues 1 to 500 (MLIFETYLIL…SKLPNFPPKE (500 aa)). The active-site Nucleophile is the Asp101. The segment at 413–433 (NSPKHPHHRTAHGSWSNQLTN) is disordered. Residues His419, Asp457, and Glu466 contribute to the active site. Residues 501-658 (QVEDEFFVEA…GVLVFGTLPD (158 aa)) form the CBM3 domain.

Belongs to the glycosyl hydrolase 9 (cellulase E) family.

Its subcellular location is the secreted. The enzyme catalyses Endohydrolysis of (1-&gt;4)-beta-D-glucosidic linkages in cellulose, lichenin and cereal beta-D-glucans.. Its activity is regulated as follows. Strongly inhibited by ZnCl(2) and by EDTA. Functionally, active on carboxymethyl cellulose and carboxymethyl cellulose-RBB but not avicel, xanthan gum, carboxymethyl-curdulan-RBB or carboxymethyl-xylan-RBB. In Bacillus pumilus (Bacillus mesentericus), this protein is Endoglucanase A (eglA).